Here is a 137-residue protein sequence, read N- to C-terminus: Large ribosomal subunit protein bL17 (137 aa).

It belongs to the bacterial ribosomal protein bL17 family. In terms of assembly, part of the 50S ribosomal subunit. Contacts protein L32.

The protein is Large ribosomal subunit protein bL17 of Bradyrhizobium sp. (strain ORS 278).